A 274-amino-acid chain; its full sequence is Thiamine kinase (274 aa).

This sequence belongs to the thiamine kinase family.

The catalysed reaction is thiamine + ATP = thiamine phosphate + ADP + H(+). It functions in the pathway cofactor biosynthesis; thiamine diphosphate biosynthesis; thiamine phosphate from thiamine: step 1/1. In terms of biological role, catalyzes the ATP-dependent phosphorylation of thiamine to thiamine phosphate. Is involved in thiamine salvage. The sequence is that of Thiamine kinase from Escherichia coli O81 (strain ED1a).